The sequence spans 149 residues: 3-hydroxyacyl-[acyl-carrier-protein] dehydratase FabZ (149 aa).

Residue His-53 is part of the active site.

Belongs to the thioester dehydratase family. FabZ subfamily.

It localises to the cytoplasm. It catalyses the reaction a (3R)-hydroxyacyl-[ACP] = a (2E)-enoyl-[ACP] + H2O. In terms of biological role, involved in unsaturated fatty acids biosynthesis. Catalyzes the dehydration of short chain beta-hydroxyacyl-ACPs and long chain saturated and unsaturated beta-hydroxyacyl-ACPs. This chain is 3-hydroxyacyl-[acyl-carrier-protein] dehydratase FabZ, found in Polynucleobacter necessarius subsp. necessarius (strain STIR1).